A 662-amino-acid polypeptide reads, in one-letter code: MKQNAIQPANLEFNAEGTPVSRDFDDVYFSNDNGLEETRYVFLGGNRLPERFPSHPRPLMIVAESGFGTGLNFLTLWQAFDVFVRDNPNVTLQRLHFISFEKYPLKAEDLRLAHQRWPELAPWAQQLQAQWPSAFGGCHRLLLDGGRVTLDLWFGDINELTRELDDSLNQQVDAWFLDGFAPAKNPDMWTQDLFSAMARLARPGGTLATFTSAGFVRRGLQEAGFTMRKSKGFGRKREMLTGEMAQTLSFPARVPWFARSSSDAREAAIIGGGIASALLSLALLRRGWQVTLYCADEAPAQGASGNRQGALYPLLSQHDPALARFFPAAFTFARRMYDALPVMFDHQWCGVTQLGWDEKSTHKIAQMLALNLPPDIACAVTAEQVAGLTGVDTGCGGITYPAGGWLCPQQLTAELLALAATRGLHVHYGYPVETLSAEGDGWLLNQQRYHQAVVLANGHRITGFAQTAQLPVYPVGGQVSHIPTTPRLAALRQVLCYDGYLTPQNPQNQQHCIGASYHRGNTDTTFSEEDQQHNRQRLIDCFPGAEWPQDVDISANDARCGVRCATRDHLPMVGNVPDYAATLTQYASLHEQPDIADSAPVCRNLFMLGALGSRGLCTAPLSAELLAAQMSAEPLPLDSDTLAALNPNRLWVRKLLKGKAVK.

Positions 1–245 (MKQNAIQPAN…KREMLTGEMA (245 aa)) are tRNA (mnm(5)s(2)U34)-methyltransferase. The FAD-dependent cmnm(5)s(2)U34 oxidoreductase stretch occupies residues 270–662 (IGGGIASALL…RKLLKGKAVK (393 aa)).

The protein in the N-terminal section; belongs to the methyltransferase superfamily. tRNA (mnm(5)s(2)U34)-methyltransferase family. It in the C-terminal section; belongs to the DAO family. The cofactor is FAD.

It localises to the cytoplasm. The enzyme catalyses 5-aminomethyl-2-thiouridine(34) in tRNA + S-adenosyl-L-methionine = 5-methylaminomethyl-2-thiouridine(34) in tRNA + S-adenosyl-L-homocysteine + H(+). Functionally, catalyzes the last two steps in the biosynthesis of 5-methylaminomethyl-2-thiouridine (mnm(5)s(2)U) at the wobble position (U34) in tRNA. Catalyzes the FAD-dependent demodification of cmnm(5)s(2)U34 to nm(5)s(2)U34, followed by the transfer of a methyl group from S-adenosyl-L-methionine to nm(5)s(2)U34, to form mnm(5)s(2)U34. This Klebsiella pneumoniae subsp. pneumoniae (strain ATCC 700721 / MGH 78578) protein is tRNA 5-methylaminomethyl-2-thiouridine biosynthesis bifunctional protein MnmC.